The chain runs to 264 residues: Expansin-B3 (264 aa).

A signal peptide spans 1 to 25; that stretch reads MQLFPVMLATLCIVLQLLIGSSALA. The Expansin-like EG45 domain maps to 54-162; that stretch reads GGACGYGTLV…RRTACKYRGK (109 aa). 3 disulfides stabilise this stretch: Cys57/Cys86, Cys89/Cys157, and Cys94/Cys100. Residues 175-256 form the Expansin-like CBD domain; the sequence is FWLSLLVEFE…NWAPKATYSS (82 aa).

The protein belongs to the expansin family. Expansin B subfamily.

It localises to the secreted. Its subcellular location is the cell wall. It is found in the membrane. Functionally, may cause loosening and extension of plant cell walls by disrupting non-covalent bonding between cellulose microfibrils and matrix glucans. No enzymatic activity has been found. The sequence is that of Expansin-B3 (EXPB3) from Arabidopsis thaliana (Mouse-ear cress).